We begin with the raw amino-acid sequence, 263 residues long: R-spondin-1 (263 aa).

The first 20 residues, 1 to 20 (MRLGLCVVALVLSWTHLTIS), serve as a signal peptide directing secretion. 2 FU repeats span residues 34-85 (AEGS…GYFD) and 91-135 (MNKC…GSSA). Cystine bridges form between Cys-40/Cys-47, Cys-44/Cys-53, Cys-56/Cys-75, Cys-79/Cys-94, Cys-97/Cys-105, Cys-102/Cys-111, Cys-114/Cys-125, Cys-129/Cys-142, Cys-148/Cys-190, Cys-159/Cys-166, and Cys-199/Cys-206. N-linked (GlcNAc...) asparagine glycosylation occurs at Asn-137. Residues 147 to 207 (QCEMSEWSPW…RCTVRRVPCP (61 aa)) form the TSP type-1 domain. C-linked (Man) tryptophan glycans are attached at residues Trp-153 and Trp-156. Residues 206-263 (CPEGQKRRKGGQGRRENANRNLARKESKEAGAGSRRRKGQQQQQQQGTVGPLTSAGPA) are disordered. The segment covering 218–234 (GRRENANRNLARKESKE) has biased composition (basic and acidic residues).

The protein belongs to the R-spondin family. In terms of assembly, interacts with the extracellular domain of FZD8 and LRP6. It however does not form a ternary complex with FZD8 and LRP6. Interacts with WNT1. Binds heparin. Interacts with ZNRF3; promoting indirect interaction between ZNRF3 and LGR4 and membrane clearance of ZNRF3. Interacts with LGR4, LGR5 and LGR6. Identified in a complex composed of RNF43, LGR5 and RSPO1. Interacts (via FU repeats) with KREM1. C-, and N-glycosylated. N-glycosylation at Asn-137, negatively influences its secretion and enhancing effect on Wnt/beta-catenin signaling. C-mannosylation at Trp-156 by DPY19L3 is required for its secretion and regulates the enhancing activity of Wnt signaling. In terms of tissue distribution, abundantly expressed in adrenal glands, ovary, testis, thyroid and trachea but not in bone marrow, spinal cord, stomach, leukocytes colon, small intestine, prostate, thymus and spleen.

The protein resides in the secreted. It is found in the nucleus. Activator of the canonical Wnt signaling pathway by acting as a ligand for LGR4-6 receptors. Upon binding to LGR4-6 (LGR4, LGR5 or LGR6), LGR4-6 associate with phosphorylated LRP6 and frizzled receptors that are activated by extracellular Wnt receptors, triggering the canonical Wnt signaling pathway to increase expression of target genes. Also regulates the canonical Wnt/beta-catenin-dependent pathway and non-canonical Wnt signaling by acting as an inhibitor of ZNRF3, an important regulator of the Wnt signaling pathway. Acts as a ligand for frizzled FZD8 and LRP6. May negatively regulate the TGF-beta pathway. Has a essential roles in ovary determination. Regulates Wnt signaling by antagonizing DKK1/KREM1-mediated internalization of LRP6 through an interaction with KREM1. This chain is R-spondin-1 (RSPO1), found in Homo sapiens (Human).